The following is a 96-amino-acid chain: Co-chaperonin GroES (96 aa).

It belongs to the GroES chaperonin family. As to quaternary structure, heptamer of 7 subunits arranged in a ring. Interacts with the chaperonin GroEL.

It is found in the cytoplasm. Together with the chaperonin GroEL, plays an essential role in assisting protein folding. The GroEL-GroES system forms a nano-cage that allows encapsulation of the non-native substrate proteins and provides a physical environment optimized to promote and accelerate protein folding. GroES binds to the apical surface of the GroEL ring, thereby capping the opening of the GroEL channel. This is Co-chaperonin GroES from Nitrosococcus oceani (strain ATCC 19707 / BCRC 17464 / JCM 30415 / NCIMB 11848 / C-107).